A 180-amino-acid chain; its full sequence is Bifunctional protein PyrR (180 aa).

The PRPP-binding signature appears at 101–113; it reads VVLVDDVIFKGRT.

The protein belongs to the purine/pyrimidine phosphoribosyltransferase family. PyrR subfamily.

It carries out the reaction UMP + diphosphate = 5-phospho-alpha-D-ribose 1-diphosphate + uracil. Regulates the transcription of the pyrimidine nucleotide (pyr) operon in response to exogenous pyrimidines. Functionally, also displays a weak uracil phosphoribosyltransferase activity which is not physiologically significant. The chain is Bifunctional protein PyrR from Trichormus variabilis (strain ATCC 29413 / PCC 7937) (Anabaena variabilis).